Reading from the N-terminus, the 138-residue chain is Transcription antitermination protein NusB (138 aa).

Belongs to the NusB family.

Involved in transcription antitermination. Required for transcription of ribosomal RNA (rRNA) genes. Binds specifically to the boxA antiterminator sequence of the ribosomal RNA (rrn) operons. This Blochmanniella floridana protein is Transcription antitermination protein NusB.